An 843-amino-acid polypeptide reads, in one-letter code: Translation initiation factor IF-2 (843 aa).

2 disordered regions span residues 50-72 (LKSS…KTTS) and 94-260 (QRSP…TGPV). A compositionally biased stretch (basic and acidic residues) spans 96-135 (SPEEIQAEQKREQDERRAAENAARDKVDADVRQRNEEQAR). Residues 139-173 (TATAAAAPAAKAEPAPAAAAPAPAPVVADAPASED) are compositionally biased toward low complexity. 2 stretches are compositionally biased toward basic and acidic residues: residues 174 to 203 (AAAR…RGEA) and 227 to 236 (TTDEESDGAR). A compositionally biased stretch (basic residues) spans 237–250 (RGRGGKGKLKKRNQ). A tr-type G domain is found at 343–516 (SRAPVVTVMG…EVLELTATPT (174 aa)). Residues 352-359 (GHVDHGKT) form a G1 region. 352–359 (GHVDHGKT) serves as a coordination point for GTP. The G2 stretch occupies residues 377-381 (GITQH). Residues 398–401 (DTPG) form a G3 region. Residues 398–402 (DTPGH) and 452–455 (NKID) contribute to the GTP site. The tract at residues 452 to 455 (NKID) is G4. Residues 488–490 (SAK) are G5.

Belongs to the TRAFAC class translation factor GTPase superfamily. Classic translation factor GTPase family. IF-2 subfamily.

The protein localises to the cytoplasm. Its function is as follows. One of the essential components for the initiation of protein synthesis. Protects formylmethionyl-tRNA from spontaneous hydrolysis and promotes its binding to the 30S ribosomal subunits. Also involved in the hydrolysis of GTP during the formation of the 70S ribosomal complex. The chain is Translation initiation factor IF-2 from Pseudomonas putida (strain W619).